A 284-amino-acid polypeptide reads, in one-letter code: Avenin-like b10 (284 aa).

The first 18 residues, 1–18 (MKVFILALLALAATTAIA), serve as a signal peptide directing secretion.

The protein belongs to the prolamin family. In terms of processing, contains disulfide bonds.

In terms of biological role, seed storage protein. Might be integrated via inter-chain disulfide bonds within the glutenin polymer. The sequence is that of Avenin-like b10 from Triticum aestivum (Wheat).